The chain runs to 456 residues: MLKKNPYIDAHTTFAIIGLGVSGKAALRYALGFGAHLLVSDRRDEEALLAQLVALAGDVVVDYEAGGHTFQFLSQADVIFVSPGFADGELLARLRRAGVQVLGELALAAPVLDRPVVAITGTNGKTTVTSLVGDLLRASGKRVFVGGNIGVPLLDLLSSGDEVDVIVLEVSSFQLELAGDFSPHIALLLNLSPDHLDRHGDLAGYRAAKMHLFQKQGMTDIAIVSGDDPLCLLSDGCGEASRYLFGFSAASDISVAAGHFEFDFAGQREIYSLRDSALDNRTGWLNAAPAAFIARSLACAKADIERGIAAFTLDAHRMEPVASIAGVQYYNDSKATNTGAVISALQQLVRVILIAGGRDKGDNYRLLREAVAGHVRTLICIGEATPLLVAALEDVVQVYRATSLAEAVSLAASFAEEGDSVLLSPACASFDMFANYQDRGEQFRRQVLQLQDVGSK.

An ATP-binding site is contributed by 121 to 127 (GTNGKTT).

It belongs to the MurCDEF family.

Its subcellular location is the cytoplasm. It catalyses the reaction UDP-N-acetyl-alpha-D-muramoyl-L-alanine + D-glutamate + ATP = UDP-N-acetyl-alpha-D-muramoyl-L-alanyl-D-glutamate + ADP + phosphate + H(+). Its pathway is cell wall biogenesis; peptidoglycan biosynthesis. Cell wall formation. Catalyzes the addition of glutamate to the nucleotide precursor UDP-N-acetylmuramoyl-L-alanine (UMA). In Desulfotalea psychrophila (strain LSv54 / DSM 12343), this protein is UDP-N-acetylmuramoylalanine--D-glutamate ligase.